A 273-amino-acid polypeptide reads, in one-letter code: Bis(5'-nucleosyl)-tetraphosphatase, symmetrical (273 aa).

Belongs to the Ap4A hydrolase family.

It catalyses the reaction P(1),P(4)-bis(5'-adenosyl) tetraphosphate + H2O = 2 ADP + 2 H(+). Functionally, hydrolyzes diadenosine 5',5'''-P1,P4-tetraphosphate to yield ADP. This chain is Bis(5'-nucleosyl)-tetraphosphatase, symmetrical (apaH), found in Buchnera aphidicola subsp. Schizaphis graminum (strain Sg).